A 656-amino-acid chain; its full sequence is Chaperone protein DnaK (656 aa).

Residues 590–605 (GGAAGGAAGGAAGGAA) show a composition bias toward gly residues. The disordered stretch occupies residues 590–656 (GGAAGGAAGG…DGQPKPGPAA (67 aa)). Low complexity predominate over residues 606–621 (GDAAGAAGDSTGDAAG). Gly residues predominate over residues 622–635 (AAGGPSEGPAGDAG).

The protein belongs to the heat shock protein 70 family.

Its function is as follows. Acts as a chaperone. The polypeptide is Chaperone protein DnaK (Cenarchaeum symbiosum (strain A)).